The primary structure comprises 70 residues: MGSFSIWHWLIVLVVVLLIFGTKKLRNIGSDLGGAVKGFKEGMKDDAPKISESDKGGHTIDAEVKDKQNS.

A helical membrane pass occupies residues 1–21; the sequence is MGSFSIWHWLIVLVVVLLIFG. Positions 46–70 are disordered; sequence DAPKISESDKGGHTIDAEVKDKQNS.

Belongs to the TatA/E family. In terms of assembly, the Tat system comprises two distinct complexes: a TatABC complex, containing multiple copies of TatA, TatB and TatC subunits, and a separate TatA complex, containing only TatA subunits. Substrates initially bind to the TatABC complex, which probably triggers association of the separate TatA complex to form the active translocon.

It is found in the cell inner membrane. Its function is as follows. Part of the twin-arginine translocation (Tat) system that transports large folded proteins containing a characteristic twin-arginine motif in their signal peptide across membranes. TatA could form the protein-conducting channel of the Tat system. The protein is Sec-independent protein translocase protein TatA of Thiobacillus denitrificans (strain ATCC 25259 / T1).